We begin with the raw amino-acid sequence, 294 residues long: tRNA dimethylallyltransferase (294 aa).

Residue 10–17 (GPTAVGKT) coordinates ATP. Residue 12–17 (TAVGKT) participates in substrate binding. The tract at residues 35–38 (DSQQ) is interaction with substrate tRNA.

Belongs to the IPP transferase family. Monomer. Requires Mg(2+) as cofactor.

The enzyme catalyses adenosine(37) in tRNA + dimethylallyl diphosphate = N(6)-dimethylallyladenosine(37) in tRNA + diphosphate. In terms of biological role, catalyzes the transfer of a dimethylallyl group onto the adenine at position 37 in tRNAs that read codons beginning with uridine, leading to the formation of N6-(dimethylallyl)adenosine (i(6)A). The sequence is that of tRNA dimethylallyltransferase from Streptococcus pneumoniae serotype 2 (strain D39 / NCTC 7466).